The following is a 529-amino-acid chain: N5-hydroxyornithine acetylase sidL (529 aa).

Disordered regions lie at residues 59-95 (ASVN…VRPF) and 239-258 (SPWP…SPVA). Position 462 (histidine 462) interacts with substrate. Glutamate 498 acts as the Proton acceptor in catalysis.

The protein belongs to the lysine N-acyltransferase mbtK family.

The protein resides in the cytoplasm. Its subcellular location is the cytosol. Its pathway is siderophore biosynthesis. Functionally, acyltransferase; part of the gene cluster that mediates the biosynthesis of at least 11 siderophores, including beauverichelin A, dimerumic acid (DA), Na-dimethyl coprogen (NADC), eleutherazine B, ferricrocin (FC), fusarinine A, fusarinine C (FsC), metachelin A, mevalonolactone, rhodotorulic acid (RA) and tenellin. This cocktail of siderophores for iron metabolism is essential for virulence, and more specifically for the fungal virulence in penetrating through the host cuticle. Siderophore synthesis is also involved in conidial germination under iron-deficient conditions. SIDL contributes to partial production of ferricrocin under iron-limiting conditions via the acetylation of N(5)-hydroxyornithine. In Beauveria bassiana (strain ARSEF 2860) (White muscardine disease fungus), this protein is N5-hydroxyornithine acetylase sidL.